Consider the following 218-residue polypeptide: Leucine-rich repeat protein 2 (218 aa).

The N-terminal stretch at 1 to 27 is a signal peptide; that stretch reads MVAQNSRRELLAASLILTLALIRLTEA. LRR repeat units lie at residues 69 to 93, 94 to 117, 119 to 141, 142 to 165, and 167 to 190; these read HHQVTRLDLGNSNLSGHLVPELGKL, EHLQYLELYKNEIQGTIPSELGNL, SLISLDLYNNNLTGKIPSSLGKL, KSLVFLRLNENRLTGPIPRELTVI, and SLKVVDVSGNDLCGTIPVEGPFEH.

In terms of biological role, probably involved in plant defense response. In Arabidopsis thaliana (Mouse-ear cress), this protein is Leucine-rich repeat protein 2.